The chain runs to 87 residues: Small ribosomal subunit protein bS20 (87 aa).

The protein belongs to the bacterial ribosomal protein bS20 family.

Binds directly to 16S ribosomal RNA. This chain is Small ribosomal subunit protein bS20, found in Geobacter sulfurreducens (strain ATCC 51573 / DSM 12127 / PCA).